The following is a 132-amino-acid chain: Aspartate 1-decarboxylase (132 aa).

The active-site Schiff-base intermediate with substrate; via pyruvic acid is the Ser25. Pyruvic acid (Ser) is present on Ser25. Position 57 (Thr57) interacts with substrate. The active-site Proton donor is the Tyr58. A substrate-binding site is contributed by 73-75 (GAA).

This sequence belongs to the PanD family. Heterooctamer of four alpha and four beta subunits. It depends on pyruvate as a cofactor. Is synthesized initially as an inactive proenzyme, which is activated by self-cleavage at a specific serine bond to produce a beta-subunit with a hydroxyl group at its C-terminus and an alpha-subunit with a pyruvoyl group at its N-terminus.

The protein resides in the cytoplasm. It carries out the reaction L-aspartate + H(+) = beta-alanine + CO2. It functions in the pathway cofactor biosynthesis; (R)-pantothenate biosynthesis; beta-alanine from L-aspartate: step 1/1. In terms of biological role, catalyzes the pyruvoyl-dependent decarboxylation of aspartate to produce beta-alanine. This Pelotomaculum thermopropionicum (strain DSM 13744 / JCM 10971 / SI) protein is Aspartate 1-decarboxylase.